The sequence spans 588 residues: Aspartate--tRNA ligase (588 aa).

E172 lines the L-aspartate pocket. Positions 196–199 are aspartate; the sequence is QLFK. Position 218 (R218) interacts with L-aspartate. ATP-binding positions include 218 to 220 and Q227; that span reads RDE. H449 serves as a coordination point for L-aspartate. E483 is a binding site for ATP. Residue R490 coordinates L-aspartate. 535–538 contacts ATP; the sequence is GLDR.

The protein belongs to the class-II aminoacyl-tRNA synthetase family. Type 1 subfamily. Homodimer.

The protein localises to the cytoplasm. It catalyses the reaction tRNA(Asp) + L-aspartate + ATP = L-aspartyl-tRNA(Asp) + AMP + diphosphate. In terms of biological role, catalyzes the attachment of L-aspartate to tRNA(Asp) in a two-step reaction: L-aspartate is first activated by ATP to form Asp-AMP and then transferred to the acceptor end of tRNA(Asp). This Histophilus somni (strain 2336) (Haemophilus somnus) protein is Aspartate--tRNA ligase.